The sequence spans 114 residues: MKTIIVFLSLLVLATKFGDANEGVNQEQMKEVIQNEFREDFLNEMAAMSLLQQLEAIESTLLEKEADRNSRQKRCLGENVPCGDFPCCGKLACEKTFGYGWWYKSPFCVKPSKG.

A signal peptide spans 1-20 (MKTIIVFLSLLVLATKFGDA). Positions 21-74 (NEGVNQEQMKEVIQNEFREDFLNEMAAMSLLQQLEAIESTLLEKEADRNSRQKR) are excised as a propeptide. Cystine bridges form between C75–C88, C82–C93, and C87–C108.

Belongs to the neurotoxin 14 (magi-1) family. 03 (ICK-30-40) subfamily. Expressed by the venom gland.

The protein resides in the secreted. Functionally, ion channel inhibitor. The protein is U17-barytoxin-Tl1d of Trittame loki (Brush-footed trapdoor spider).